The chain runs to 218 residues: Glutathione S-transferase Mu 1 (218 aa).

Positions 2-88 (PMTLGYWDIR…YIARKHNLCG (87 aa)) constitute a GST N-terminal domain. A glutathione-binding site is contributed by 7–8 (YW). Position 34 is a phosphothreonine (Thr34). Residues 43 to 46 (RSQW), Lys50, 59 to 60 (NL), and 72 to 73 (QS) contribute to the glutathione site. The GST C-terminal domain maps to 90–208 (TEEEKIRVDI…KSSRFLPKPL (119 aa)). Residue Tyr116 coordinates substrate.

It belongs to the GST superfamily. Mu family. As to quaternary structure, homodimer.

It is found in the cytoplasm. It carries out the reaction RX + glutathione = an S-substituted glutathione + a halide anion + H(+). It catalyses the reaction prostaglandin A2 + glutathione = prostaglandin A2-S-(R)-glutathione. The catalysed reaction is prostaglandin J2 + glutathione = prostaglandin J2-S-(R)-glutathione. The enzyme catalyses prostaglandin J2 + glutathione = prostaglandin J2-S-(S)-glutathione. It carries out the reaction prostaglandin A2 + glutathione = prostaglandin A2-S-(S)-glutathione. It catalyses the reaction 11(S)-hydroxy-14(S),15(S)-epoxy-(5Z,8Z,12E)-eicosatrienoate + glutathione = (11S,15S)-dihydroxy-14(R)-S-glutathionyl-(5Z,8Z,12E)-eicosatrienoate. Conjugation of reduced glutathione to a wide number of exogenous and endogenous hydrophobic electrophiles. Involved in the formation of glutathione conjugates of both prostaglandin A2 (PGA2) and prostaglandin J2 (PGJ2). Participates in the formation of novel hepoxilin regioisomers. This Macaca fascicularis (Crab-eating macaque) protein is Glutathione S-transferase Mu 1 (GSTM1).